Reading from the N-terminus, the 227-residue chain is Lipoprotein-releasing system ATP-binding protein LolD (227 aa).

One can recognise an ABC transporter domain in the interval 6–227; it reads LKCENINKFY…MQDGLLKEGA (222 aa). 42–49 provides a ligand contact to ATP; sequence GSSGSGKS.

The protein belongs to the ABC transporter superfamily. Lipoprotein translocase (TC 3.A.1.125) family. In terms of assembly, the complex is composed of two ATP-binding proteins (LolD) and two transmembrane proteins (LolC and LolE).

The protein resides in the cell inner membrane. Its function is as follows. Part of the ABC transporter complex LolCDE involved in the translocation of mature outer membrane-directed lipoproteins, from the inner membrane to the periplasmic chaperone, LolA. Responsible for the formation of the LolA-lipoprotein complex in an ATP-dependent manner. This Haemophilus influenzae (strain 86-028NP) protein is Lipoprotein-releasing system ATP-binding protein LolD.